The sequence spans 310 residues: Ribosomal RNA small subunit methyltransferase H (310 aa).

Residues 33-35, Asp52, Phe79, Asp98, and Gln105 contribute to the S-adenosyl-L-methionine site; that span reads GGH.

It belongs to the methyltransferase superfamily. RsmH family.

The protein localises to the cytoplasm. The enzyme catalyses cytidine(1402) in 16S rRNA + S-adenosyl-L-methionine = N(4)-methylcytidine(1402) in 16S rRNA + S-adenosyl-L-homocysteine + H(+). Its function is as follows. Specifically methylates the N4 position of cytidine in position 1402 (C1402) of 16S rRNA. The protein is Ribosomal RNA small subunit methyltransferase H of Campylobacter jejuni (strain RM1221).